A 945-amino-acid chain; its full sequence is MSDKQTPENAVDYKATLNLPGTEFAMKANLAVREVKWLEEWYADNIYQKIRASRIGKKKYVLHDGPPYANGQIHLGHAVNKVLKDIIVKSRVMDGFDAPYVPGWDCHGLPIELKVEEKVGKVGVKVDASTFRKACREYALSQVDLQRKDFIRMGVFGDWQDPYLTMNFKQEADIVRSLGEIQKAGHIEPGLKPVNWCIDCGSALAEAEVEYEDKKSDAIDVGFGVVDLNDLSARLNVEVQDPTDIVIWTTTPWTLPANQAVALHAEIDYQLVQVQSDRGTQNFILAKDLVESAIARYKLENPVVLADFKGAVLELLQLQHPLLADRQVPVILGEHVIATSGTGAVHTAPGHGTDDYKVGLIYNLKVDNPVGGNGVYLPTAPIFSGEHIYKANPQIIEALGATGRLWAHQPIVHSYPHCWRHKTPIIFRATPQWFISMDAKGLRECALNAIENDISFVPDWGKNRIESMIEGRPDWCISRQRTWGVPIPFFVHKDTNELHPRTPELIEEVAQLIEHEGIDAWFNREAKDFIGADAEHYNAVRDTLDVWFDSGTTHYAVLRQREELTDPADLYLEGSDQHRGWFQSSLLTSIAINERAPYKGLLTHGFVVDEKGRKMSKSLGNIITPQDIIKDMGADGLRFWIASSDYRYEMTAGKEIFSRASDGYRRIRNTLRFLLANLNGFTPSTDALPVDQLIALDQYILQRAAEVQKTVQQAYEDMNFHIVCSALTNFCINDLGGFYLDIIKDRQYTTKADSAARHSAQTALYHLVQAFVRWMSPILSFTAQEAWPLIPEQTEQYVFTTEWYDIPVASTANLISEADWQTLISVKSAVNKQIEAARNAKLVGSNLSAKVEIWAKDELQSVLNQLGDELRFVLITSQVNVYPYAEQGESTEMDGLRVQISAAEGEKCVRCWHVLPDVNTHADHPGLCGRCIINVTGSGEVRKYA.

Residues 67–77 carry the 'HIGH' region motif; it reads PYANGQIHLGH. Residue E573 coordinates L-isoleucyl-5'-AMP. Residues 614-618 carry the 'KMSKS' region motif; the sequence is KMSKS. K617 serves as a coordination point for ATP. Positions 908, 911, 928, and 931 each coordinate Zn(2+).

This sequence belongs to the class-I aminoacyl-tRNA synthetase family. IleS type 1 subfamily. Monomer. Zn(2+) serves as cofactor.

Its subcellular location is the cytoplasm. The catalysed reaction is tRNA(Ile) + L-isoleucine + ATP = L-isoleucyl-tRNA(Ile) + AMP + diphosphate. Its function is as follows. Catalyzes the attachment of isoleucine to tRNA(Ile). As IleRS can inadvertently accommodate and process structurally similar amino acids such as valine, to avoid such errors it has two additional distinct tRNA(Ile)-dependent editing activities. One activity is designated as 'pretransfer' editing and involves the hydrolysis of activated Val-AMP. The other activity is designated 'posttransfer' editing and involves deacylation of mischarged Val-tRNA(Ile). The protein is Isoleucine--tRNA ligase of Acinetobacter baylyi (strain ATCC 33305 / BD413 / ADP1).